The chain runs to 219 residues: Probable GTP-binding protein EngB (219 aa).

In terms of domain architecture, EngB-type G spans 31 to 205; sequence VGVEIAFAGR…LSILNEWCHP (175 aa). GTP contacts are provided by residues 39–46, 66–70, 84–87, 151–154, and 184–186; these read GRSNAGKS, GRTQL, DLPG, TKSD, and FSA. Residues Ser46 and Thr68 each contribute to the Mg(2+) site.

Belongs to the TRAFAC class TrmE-Era-EngA-EngB-Septin-like GTPase superfamily. EngB GTPase family. The cofactor is Mg(2+).

Its function is as follows. Necessary for normal cell division and for the maintenance of normal septation. This chain is Probable GTP-binding protein EngB, found in Shewanella sp. (strain MR-7).